A 351-amino-acid polypeptide reads, in one-letter code: Protein IQ-DOMAIN 27 (351 aa).

The tract at residues 15-37 (KKSKDRSHVSGGDSVKGGDHSGD) is disordered. A calmodulin-binding region spans residues 98 to 114 (EERWAAVKIQKVFRGSL). IQ domains follow at residues 99–127 (ERWA…GIVK) and 128–150 (LQAL…SIQT). A Nuclear localization signal motif is present at residues 191–198 (DRRTKIVE). Residues 299–310 (SFKAKVRSHSAP) are compositionally biased toward basic residues. The interval 299–351 (SFKAKVRSHSAPRQRSERQRLSLDEVMASKSSVSGVSMSHQHPPRHSCSCDPL) is disordered. The segment covering 312–321 (QRSERQRLSL) has biased composition (basic and acidic residues). The segment covering 324–337 (VMASKSSVSGVSMS) has biased composition (low complexity).

Belongs to the IQD family. In terms of assembly, binds to multiple calmodulin (CaM) in the presence of Ca(2+) and CaM-like proteins.

It localises to the nucleus. Its subcellular location is the nucleus envelope. The protein localises to the cytoplasm. The protein resides in the cytoskeleton. May be involved in cooperative interactions with calmodulins or calmodulin-like proteins. Recruits calmodulin proteins to microtubules, thus being a potential scaffold in cellular signaling and trafficking. May associate with nucleic acids and regulate gene expression at the transcriptional or post-transcriptional level. This is Protein IQ-DOMAIN 27 from Arabidopsis thaliana (Mouse-ear cress).